Consider the following 276-residue polypeptide: MVMLGQVVALAMASSAVALNCKNHNVLSNYNVANKDILLKNELDTPPSKTSEMWYLAPCEDGSRRQRPSECSSDDLMCAIRHVKVDGSDHLTQKLDVHKSAKYEVEEVESGGFDIRFLGVKWGSNTIDATLSYSCDTNLKTDELVTTIWNSEYVLIEMSGPSGCKRDGNSDSGDNGNGNGNGNDPDNNNNTGKDKKSKKTSWFTWLFVYAILFTVIYLMVVSYLNTKGGSFQDFRNEFVERGTEFITSLPTFVKEVVTKTLGTRDSSASRGGYSAV.

The N-terminal stretch at M1–A18 is a signal peptide. The 148-residue stretch at L19–R166 folds into the MRH domain. The Lumenal segment spans residues L19 to T200. Disulfide bonds link C21/C59, C71/C78, and C135/C164. The segment at S162–K196 is disordered. Low complexity predominate over residues G182–T191. A glycan (N-linked (GlcNAc...) asparagine) is linked at N189. A helical transmembrane segment spans residues S201–V221. Residues S222–V276 lie on the Cytoplasmic side of the membrane.

This sequence belongs to the ATG27 family.

It is found in the cytoplasmic vesicle membrane. The protein resides in the golgi apparatus membrane. The protein localises to the mitochondrion membrane. It localises to the preautophagosomal structure membrane. Its function is as follows. Effector of VPS34 phosphatidylinositol 3-phosphate kinase signaling. Regulates the cytoplasm to vacuole transport (Cvt) vesicle formation. Plays a role in ATG protein retrieval from the pre-autophagosomal structure (PAS) and is especially required for autophagy-dependent cycling of ATG9. This chain is Autophagy-related protein 27 (ATG27), found in Candida glabrata (strain ATCC 2001 / BCRC 20586 / JCM 3761 / NBRC 0622 / NRRL Y-65 / CBS 138) (Yeast).